The chain runs to 169 residues: S-ribosylhomocysteine lyase (169 aa).

Fe cation contacts are provided by histidine 54, histidine 58, and cysteine 128.

Belongs to the LuxS family. In terms of assembly, homodimer. Requires Fe cation as cofactor.

The catalysed reaction is S-(5-deoxy-D-ribos-5-yl)-L-homocysteine = (S)-4,5-dihydroxypentane-2,3-dione + L-homocysteine. In terms of biological role, involved in the synthesis of autoinducer 2 (AI-2) which is secreted by bacteria and is used to communicate both the cell density and the metabolic potential of the environment. The regulation of gene expression in response to changes in cell density is called quorum sensing. Catalyzes the transformation of S-ribosylhomocysteine (RHC) to homocysteine (HC) and 4,5-dihydroxy-2,3-pentadione (DPD). This is S-ribosylhomocysteine lyase from Shewanella pealeana (strain ATCC 700345 / ANG-SQ1).